We begin with the raw amino-acid sequence, 749 residues long: Formate acetyltransferase (749 aa).

Positions E3–K619 constitute a PFL domain. C413 acts as the S-acetylcysteine intermediate in catalysis. Catalysis depends on C414, which acts as the Cysteine radical intermediate. In terms of domain architecture, Glycine radical spans P626–M749. G724 carries the glycine radical modification.

Belongs to the glycyl radical enzyme (GRE) family. PFL subfamily. Homodimer.

Its subcellular location is the cytoplasm. It catalyses the reaction formate + acetyl-CoA = pyruvate + CoA. It participates in fermentation; pyruvate fermentation; formate from pyruvate: step 1/1. Functionally, catalyzes the conversion of pyruvate to formate and acetyl-CoA. In Staphylococcus aureus (strain USA300), this protein is Formate acetyltransferase (pflB).